A 242-amino-acid chain; its full sequence is Phosphoribosylaminoimidazole-succinocarboxamide synthase (242 aa).

Belongs to the SAICAR synthetase family.

It carries out the reaction 5-amino-1-(5-phospho-D-ribosyl)imidazole-4-carboxylate + L-aspartate + ATP = (2S)-2-[5-amino-1-(5-phospho-beta-D-ribosyl)imidazole-4-carboxamido]succinate + ADP + phosphate + 2 H(+). It participates in purine metabolism; IMP biosynthesis via de novo pathway; 5-amino-1-(5-phospho-D-ribosyl)imidazole-4-carboxamide from 5-amino-1-(5-phospho-D-ribosyl)imidazole-4-carboxylate: step 1/2. The protein is Phosphoribosylaminoimidazole-succinocarboxamide synthase of Ehrlichia chaffeensis (strain ATCC CRL-10679 / Arkansas).